A 323-amino-acid chain; its full sequence is Beta-ketoacyl-[acyl-carrier-protein] synthase III (323 aa).

Catalysis depends on residues cysteine 114 and histidine 250. Residues 251–255 (QANIR) form an ACP-binding region. Asparagine 280 is an active-site residue.

It belongs to the thiolase-like superfamily. FabH family. As to quaternary structure, homodimer.

Its subcellular location is the cytoplasm. It catalyses the reaction malonyl-[ACP] + acetyl-CoA + H(+) = 3-oxobutanoyl-[ACP] + CO2 + CoA. Its pathway is lipid metabolism; fatty acid biosynthesis. In terms of biological role, catalyzes the condensation reaction of fatty acid synthesis by the addition to an acyl acceptor of two carbons from malonyl-ACP. Catalyzes the first condensation reaction which initiates fatty acid synthesis and may therefore play a role in governing the total rate of fatty acid production. Possesses both acetoacetyl-ACP synthase and acetyl transacylase activities. Its substrate specificity determines the biosynthesis of branched-chain and/or straight-chain of fatty acids. This chain is Beta-ketoacyl-[acyl-carrier-protein] synthase III, found in Alkalilimnicola ehrlichii (strain ATCC BAA-1101 / DSM 17681 / MLHE-1).